Consider the following 3746-residue polypeptide: N-(5-amino-5-carboxypentanoyl)-L-cysteinyl-D-valine synthase (3746 aa).

The interval 299–711 (EEVVERHEDK…GRADFQIKLR (413 aa)) is adenylation (A) domain 1. Positions 818–895 (DLRGDTEIAL…RMADLLQNKQ (78 aa)) constitute a Carrier 1 domain. Ser855 carries the post-translational modification O-(pantetheine 4'-phosphoryl)serine. A condensation (C) domain 1 region spans residues 918–1372 (NIYLANSLQQ…YLSSIQLEQL (455 aa)). The interval 1391–1801 (FENEASQKPD…GRNDFQVKIR (411 aa)) is adenylation (A) domain 2. The Carrier 2 domain occupies 1902-1979 (PPRSEIERSL…AQTHLILNDA (78 aa)). Ser1939 is subject to O-(pantetheine 4'-phosphoryl)serine. Residues 1994–2434 (QMIPVSRAQE…SELSAEGINE (441 aa)) are condensation (C) domain 2. An adenylation (A) domain 3 region spans residues 2478–2883 (AFLAAEKIAV…GRGDLQIKMR (406 aa)). The region spanning 2991 to 3066 (PPRNIIEAKM…ALHDHVFMKD (76 aa)) is the Carrier 3 domain. An O-(pantetheine 4'-phosphoryl)serine modification is found at Ser3026. Residues 3084-3500 (GEAPLLPIQD…NKILDGRASQ (417 aa)) form an epimerase (E) domain region. A thioesterase (TE) domain region spans residues 3530-3732 (TLFLLPPGEG…FSWVGNPQQV (203 aa)).

This sequence belongs to the NRP synthetase family. The cofactor is pantetheine 4'-phosphate. Requires Mg(2+) as cofactor.

Its subcellular location is the cytoplasm. The protein localises to the cytosol. It localises to the vacuole membrane. It catalyses the reaction L-2-aminoadipate + L-valine + L-cysteine + 3 ATP + H2O = N-[(5S)-5-amino-5-carboxypentanoyl]-L-cysteinyl-D-valine + 3 AMP + 3 diphosphate + 3 H(+). Its pathway is antibiotic biosynthesis; penicillin G biosynthesis; penicillin G from L-alpha-aminoadipate and L-cysteine and L-valine: step 1/3. Its function is as follows. Nonribosomal peptide synthetase; part of the gene cluster that mediates the biosynthesis of penicillin, the world's most important antibiotic. The trimodular NRPS acvA produces the tripeptide N-[(5S)-5-amino-5-carboxypentanoyl]-L-cysteinyl-D-valine (LLD-ACV or ACV) via condensation of the 3 residues L-2-aminoadipate, L-cysteine and L-valine. The precursor amino acids for penicillin biosynthesis are withdrawn from the vacuolar amino acid pool by the MFS-type transporter penV. Each of the constituent amino acids of the tripeptide ACV are activated as aminoacyl-adenylates with peptide bonds formed through the participation of amino acid thioester intermediates. The penicillin biosynthesis occurs via 3 enzymatic steps, the first corresponding to the production of the tripeptide N-[(5S)-5-amino-5-carboxypentanoyl]-L-cysteinyl-D-valine (LLD-ACV or ACV) by the NRPS acvA. The tripeptide ACV is then cyclized to isopenicillin N (IPN) by the isopenicillin N synthase ipnA that forms the beta-lactam nucleus. Finally, the alpha-aminoadipyl side chain is exchanged for phenylacetic acid by the isopenicillin N acyltransferase aatA to yield penicillin in the peroxisomal matrix. The protein is N-(5-amino-5-carboxypentanoyl)-L-cysteinyl-D-valine synthase of Penicillium chrysogenum (Penicillium notatum).